The primary structure comprises 153 residues: Large ribosomal subunit protein uL15 (153 aa).

A disordered region spans residues 1–47 (MRLHELSPAPGSRKDRKRVGRGDAGRGNYSGRGMKGQKARSGGATRP).

Belongs to the universal ribosomal protein uL15 family. As to quaternary structure, part of the 50S ribosomal subunit.

Binds to the 23S rRNA. The polypeptide is Large ribosomal subunit protein uL15 (Dehalococcoides mccartyi (strain ATCC BAA-2100 / JCM 16839 / KCTC 5957 / BAV1)).